A 176-amino-acid polypeptide reads, in one-letter code: Peptide deformylase (176 aa).

Fe cation-binding residues include Cys94 and His136. Residue Glu137 is part of the active site. A Fe cation-binding site is contributed by His140.

It belongs to the polypeptide deformylase family. Fe(2+) is required as a cofactor.

It carries out the reaction N-terminal N-formyl-L-methionyl-[peptide] + H2O = N-terminal L-methionyl-[peptide] + formate. Removes the formyl group from the N-terminal Met of newly synthesized proteins. Requires at least a dipeptide for an efficient rate of reaction. N-terminal L-methionine is a prerequisite for activity but the enzyme has broad specificity at other positions. In Mesorhizobium japonicum (strain LMG 29417 / CECT 9101 / MAFF 303099) (Mesorhizobium loti (strain MAFF 303099)), this protein is Peptide deformylase.